The following is a 43-amino-acid chain: Protein PsbN (43 aa).

Residues 7–27 traverse the membrane as a helical segment; sequence LIIFIASLLLGLTGYSIYTAF.

It belongs to the PsbN family.

The protein resides in the plastid. Its subcellular location is the chloroplast thylakoid membrane. Its function is as follows. May play a role in photosystem I and II biogenesis. This chain is Protein PsbN, found in Guillardia theta (Cryptophyte).